The sequence spans 85 residues: Small ribosomal subunit protein bS16 (85 aa).

This sequence belongs to the bacterial ribosomal protein bS16 family.

This Neorickettsia sennetsu (strain ATCC VR-367 / Miyayama) (Ehrlichia sennetsu) protein is Small ribosomal subunit protein bS16.